The chain runs to 108 residues: Tubulin-specific chaperone A (108 aa).

The residue at position 2 (alanine 2) is an N-acetylalanine.

The protein belongs to the TBCA family. Supercomplex made of cofactors A to E. Cofactors A and D function by capturing and stabilizing tubulin in a quasi-native conformation. Cofactor E binds to the cofactor D-tubulin complex; interaction with cofactor C then causes the release of tubulin polypeptides that are committed to the native state.

The protein resides in the cytoplasm. It localises to the cytoskeleton. Its function is as follows. Tubulin-folding protein; involved in the early step of the tubulin folding pathway. This is Tubulin-specific chaperone A (TBCA) from Oryctolagus cuniculus (Rabbit).